Reading from the N-terminus, the 159-residue chain is MSGLTHFDAAGHAHMVDVGGKQETQRIAVARGTIRMLPATFELIRDGKAKKGDVLGVARIAAIQGAKRTADLIPLCHPLALTRVAVDFELDDALPGVHCIAQVETFGRTGVEMEALTAVQVGLLTVYDMCKAVDRGMVIGDVSVTEKRGGKSGDWKAQA.

Substrate contacts are provided by residues 75 to 77 and 113 to 114; these read LCH and ME. Aspartate 128 is an active-site residue.

This sequence belongs to the MoaC family. As to quaternary structure, homohexamer; trimer of dimers.

It carries out the reaction (8S)-3',8-cyclo-7,8-dihydroguanosine 5'-triphosphate = cyclic pyranopterin phosphate + diphosphate. The protein operates within cofactor biosynthesis; molybdopterin biosynthesis. Functionally, catalyzes the conversion of (8S)-3',8-cyclo-7,8-dihydroguanosine 5'-triphosphate to cyclic pyranopterin monophosphate (cPMP). The chain is Cyclic pyranopterin monophosphate synthase from Burkholderia multivorans (strain ATCC 17616 / 249).